Here is a 360-residue protein sequence, read N- to C-terminus: Peptide chain release factor 1 (360 aa).

Gln237 is modified (N5-methylglutamine).

The protein belongs to the prokaryotic/mitochondrial release factor family. Methylated by PrmC. Methylation increases the termination efficiency of RF1.

Its subcellular location is the cytoplasm. Its function is as follows. Peptide chain release factor 1 directs the termination of translation in response to the peptide chain termination codons UAG and UAA. This chain is Peptide chain release factor 1, found in Stutzerimonas stutzeri (strain A1501) (Pseudomonas stutzeri).